The following is a 147-amino-acid chain: uncharacterized protein (147 aa).

A run of 2 helical transmembrane segments spans residues 41–61 and 67–87; these read LANF…ALLI and LLAA…SFPL.

The protein resides in the cell membrane. This is an uncharacterized protein from Pyrococcus horikoshii (strain ATCC 700860 / DSM 12428 / JCM 9974 / NBRC 100139 / OT-3).